Consider the following 336-residue polypeptide: MEMMVLLSQEHPELPSAELRSVLMSEGIDFSVIESGSGYEVIDAPRSTWKILKKRLAYAHEISEVIGYAAADDLDDAAEEIDWSKYVRESFAVRIRKLCGDVDSRTLERTIGAIIKEDTGLKVDLEKPWTLIRPVLINDRFILTRRLAVISKEHFNQARPHKRPFFYPGSMSPKLARCMVNLSGVKAGDRILDPFCGTGGILIEAGLMGVRVVGADIDWRMVEGTRENLQHYGITDFEVIRSDARDLRLDEKVDAIVTDPPYGISASTAGEKSEKLYREFLDSAHSNLAEGGMICMAAPHYLDLESLIDERFSIRERYSMRMHRSLTRVIRVIERV.

A THUMP domain is found at 50–147 (KILKKRLAYA…NDRFILTRRL (98 aa)).

The protein belongs to the methyltransferase superfamily. Trm-G10 family. As to quaternary structure, monomer.

The protein resides in the cytoplasm. It carries out the reaction guanosine(10) in tRNA + 2 S-adenosyl-L-methionine = N(2)-dimethylguanosine(10) in tRNA + 2 S-adenosyl-L-homocysteine + 2 H(+). Functionally, catalyzes the adenosylmethionine-dependent methylation of the exocyclic amino group (N(2)) of guanosine at position 10 of various tRNAs. Acts via a two-step process that leads to the formation of either N(2)-monomethyl (m(2)G) or N(2)-dimethylguanosine (m(2)(2)G). The chain is tRNA (guanine(10)-N2)-dimethyltransferase (trmG10) from Methanothermobacter thermautotrophicus (strain ATCC 29096 / DSM 1053 / JCM 10044 / NBRC 100330 / Delta H) (Methanobacterium thermoautotrophicum).